Consider the following 251-residue polypeptide: Triosephosphate isomerase 1 (251 aa).

9–11 is a substrate binding site; that stretch reads NWK. The Electrophile role is filled by His-95. The active-site Proton acceptor is Glu-167. Substrate-binding positions include Gly-173, Ser-213, and 234–235; that span reads GG.

The protein belongs to the triosephosphate isomerase family. Homodimer.

It is found in the cytoplasm. The enzyme catalyses D-glyceraldehyde 3-phosphate = dihydroxyacetone phosphate. The protein operates within carbohydrate biosynthesis; gluconeogenesis. Its pathway is carbohydrate degradation; glycolysis; D-glyceraldehyde 3-phosphate from glycerone phosphate: step 1/1. Its function is as follows. Involved in the gluconeogenesis. Catalyzes stereospecifically the conversion of dihydroxyacetone phosphate (DHAP) to D-glyceraldehyde-3-phosphate (G3P). In Listeria monocytogenes serovar 1/2a (strain ATCC BAA-679 / EGD-e), this protein is Triosephosphate isomerase 1.